Here is a 569-residue protein sequence, read N- to C-terminus: Urease subunit alpha (569 aa).

The Urease domain occupies 131–569 (GGIDAHIHFI…VPMAQRYFLF (439 aa)). Residues His-136, His-138, and Lys-219 each coordinate Ni(2+). Lys-219 is modified (N6-carboxylysine). Residue His-221 participates in substrate binding. Residues His-248 and His-274 each contribute to the Ni(2+) site. Catalysis depends on His-322, which acts as the Proton donor. Asp-362 contributes to the Ni(2+) binding site.

The protein belongs to the metallo-dependent hydrolases superfamily. Urease alpha subunit family. As to quaternary structure, heterotrimer of UreA (gamma), UreB (beta) and UreC (alpha) subunits. Three heterotrimers associate to form the active enzyme. The cofactor is Ni cation. In terms of processing, carboxylation allows a single lysine to coordinate two nickel ions.

It is found in the cytoplasm. It carries out the reaction urea + 2 H2O + H(+) = hydrogencarbonate + 2 NH4(+). It participates in nitrogen metabolism; urea degradation; CO(2) and NH(3) from urea (urease route): step 1/1. The chain is Urease subunit alpha from Bacillus sp. (strain TB-90).